The primary structure comprises 71 residues: Large ribosomal subunit protein eL38 (71 aa).

It belongs to the eukaryotic ribosomal protein eL38 family.

In Argas monolakensis (Mono lake bird tick), this protein is Large ribosomal subunit protein eL38 (RpL38).